A 140-amino-acid polypeptide reads, in one-letter code: Histone H3-like centromeric protein A (140 aa).

A disordered region spans residues 1-46 (MGPRRRSRKPEAPRRRSPSPTPTPGPSRRGPSLGASSHQHSRRRQG). Residue G2 is modified to N,N,N-trimethylglycine. S7 is modified (phosphoserine; by AURKA and AURKB). A phosphoserine mark is found at S17, S19, and S27. A compositionally biased stretch (low complexity) spans 26–37 (PSRRGPSLGASS). The important for flexibility of DNA ends that protrude from nucleosomes stretch occupies residues 39–54 (QHSRRRQGWLKEIRKL). Residue S68 is modified to Phosphoserine. The tract at residues 75–116 (CVKFTRGVDFNWQAQALLALQEAAEAFLVHLFEDAYLLTLHA) is CATD.

This sequence belongs to the histone H3 family. Component of centromeric nucleosomes, where DNA is wrapped around a histone octamer core. The octamer contains two molecules each of H2A, H2B, CENPA and H4 assembled in one CENPA-H4 heterotetramer and two H2A-H2B heterodimers. CENPA modulates the DNA-binding characteristics of nucleosomes so that protruding DNA ends have higher flexibility than in nucleosomes containing conventional histone H3. Inhibits binding of histone H1 to nucleosomes, since histone H1 binds preferentially to rigid DNA linkers that protrude from nucleosomes. Nucleosomes containing CENPA also contain histone H2A variants such as MACROH2A and H2A.Z/H2AZ1. The CENPA-H4 heterotetramer is more compact and structurally more rigid than corresponding H3-H4 heterotetramers. Can assemble into nucleosomes that contain both CENPA and histone H3.3; these nucleosomes interact with a single CENPC chain. Heterotrimer composed of HJURP, CENPA and histone H4, where HJURP interacts with the dimer formed by CENPA and histone H4 and prevents tetramerization of CENPA and H4. Component of the CENPA-NAC complex, at least composed of CENPA, CENPC, CENPH, CENPM, CENPN, CENPT and CENPU. Interacts (via CATD domain) with HJURP; the interaction is direct and is required for its localization to centromeres. Interacts with CENPC, CENPN and CENPT; interaction is direct. Part of a centromere complex consisting of CENPA, CENPT and CENPW. Identified in centromere complexes containing histones H2A, H2B and H4, and at least CENPA, CENPB, CENPC, CENPT, CENPN, HJURP, SUPT16H, SSRP1 and RSF1. Can self-associate. The CENPA-H4 heterotetramer can bind DNA by itself (in vitro). Interacts with CDK1, PPP1CA and RBBP7. In terms of assembly, (Microbial infection) Interacts directly with herpes virus HHV-1 protein ICP0. Ubiquitinated. Interaction with herpes virus HSV-1 ICP0 protein, leads to its degradation by the proteasome pathway. Post-translationally, trimethylated by NTMT1 at the N-terminal glycine after cleavage of Met-1. Methylation is low before incorporation into nucleosomes and increases with cell cycle progression, with the highest levels in mitotic nucleosomes. In terms of processing, phosphorylated by CDK1 at Ser-68 during early mitosis; this abolishes association with chromatin and centromeres, prevents interaction with HJURP and thereby prevents premature assembly of CENPA into centromeres. Dephosphorylated at Ser-68 by PPP1CA during late mitosis. Phosphorylation of Ser-7 by AURKA and AURKB during prophase is required for localization of AURKA and AURKB at inner centromere and is essential for normal cytokinesis. Initial phosphorylation during prophase is mediated by AURKA and is maintained by AURKB. Poly-ADP-ribosylated by PARP1.

It localises to the nucleus. The protein resides in the chromosome. Its subcellular location is the centromere. Histone H3-like nucleosomal protein that is specifically found in centromeric nucleosomes. Replaces conventional H3 in the nucleosome core of centromeric chromatin that serves as an assembly site for the inner kinetochore. The presence of CENPA subtly modifies the nucleosome structure and the way DNA is wrapped around the nucleosome and gives rise to protruding DNA ends that are less well-ordered and rigid compared to nucleosomes containing histone H3. May serve as an epigenetic mark that propagates centromere identity through replication and cell division. Required for recruitment and assembly of kinetochore proteins, and as a consequence required for progress through mitosis, chromosome segregation and cytokinesis. This Homo sapiens (Human) protein is Histone H3-like centromeric protein A (CENPA).